A 336-amino-acid polypeptide reads, in one-letter code: tRNA N6-adenosine threonylcarbamoyltransferase (336 aa).

Residues H115 and H119 each contribute to the Fe cation site. Substrate contacts are provided by residues L137 to G141, D170, G183, D187, and N276. D302 provides a ligand contact to Fe cation.

Belongs to the KAE1 / TsaD family. Fe(2+) is required as a cofactor.

The protein localises to the cytoplasm. It catalyses the reaction L-threonylcarbamoyladenylate + adenosine(37) in tRNA = N(6)-L-threonylcarbamoyladenosine(37) in tRNA + AMP + H(+). Functionally, required for the formation of a threonylcarbamoyl group on adenosine at position 37 (t(6)A37) in tRNAs that read codons beginning with adenine. Is involved in the transfer of the threonylcarbamoyl moiety of threonylcarbamoyl-AMP (TC-AMP) to the N6 group of A37, together with TsaE and TsaB. TsaD likely plays a direct catalytic role in this reaction. This is tRNA N6-adenosine threonylcarbamoyltransferase from Streptococcus suis (strain 98HAH33).